The chain runs to 89 residues: Defensin-like protein 108 (89 aa).

The first 20 residues, 1 to 20, serve as a signal peptide directing secretion; it reads MTSLIAFLFTVLVIVSSVHC. Cystine bridges form between Cys39–Cys81, Cys49–Cys71, Cys57–Cys79, and Cys61–Cys80.

This sequence belongs to the DEFL family.

The protein resides in the secreted. The chain is Defensin-like protein 108 (LCR51) from Arabidopsis thaliana (Mouse-ear cress).